Here is a 494-residue protein sequence, read N- to C-terminus: Alpha-amylase-related protein (494 aa).

A signal peptide spans 1–20 (MIKFALALTLCLAGASLSLA). Pyrrolidone carboxylic acid is present on Gln21. A disulfide bond links Cys48 and Cys104. The Ca(2+) site is built by Asn118, Gln169, and Asp178. Residues Cys157 and Cys171 are joined by a disulfide bond. Residue Arg206 participates in chloride binding. The Nucleophile role is filled by Asp208. Residue His212 coordinates Ca(2+). Glu245 functions as the Proton donor in the catalytic mechanism. 2 residues coordinate chloride: Asn308 and Arg343. 3 disulfide bridges follow: Cys376–Cys382, Cys418–Cys441, and Cys448–Cys460.

The protein belongs to the glycosyl hydrolase 13 family. As to quaternary structure, monomer. Requires Ca(2+) as cofactor. The cofactor is chloride.

The protein localises to the secreted. The enzyme catalyses Endohydrolysis of (1-&gt;4)-alpha-D-glucosidic linkages in polysaccharides containing three or more (1-&gt;4)-alpha-linked D-glucose units.. This Drosophila jambulina (Fruit fly) protein is Alpha-amylase-related protein (Amyrel).